The chain runs to 530 residues: Vesicular acetylcholine transporter (530 aa).

Topologically, residues 1 to 33 (MEPTAPTGQARAAATKLSEAVGAALQEPQRQRR) are cytoplasmic. Residues 34–54 (LVLVIVCVALLLDNMLYMVIV) form a helical membrane-spanning segment. At 55 to 125 (PIVPDYIAHM…PTESEDVKIG (71 aa)) the chain is on the lumenal, vesicle side. N-linked (GlcNAc...) asparagine glycosylation is found at N89 and N96. A helical transmembrane segment spans residues 126 to 146 (VLFASKAILQLLVNPLSGPFI). Residues 147–152 (DRMSYD) lie on the Cytoplasmic side of the membrane. The chain crosses the membrane as a helical span at residues 153–173 (VPLLIGLGVMFASTVMFAFAE). Over 174-182 (DYATFFAAR) the chain is Lumenal, vesicle. The chain crosses the membrane as a helical span at residues 183–203 (SLQGLGSAFADTSGIAMIADK). Residues 204 to 213 (YPEEPERSRA) lie on the Cytoplasmic side of the membrane. The helical transmembrane segment at 214-234 (LGVALAFISFGSLVAPPFGGI) threads the bilayer. Over 235–242 (LYEFAGKR) the chain is Lumenal, vesicle. A helical transmembrane segment spans residues 243 to 263 (VPFLVLAAVSLFDALLLLAVA). At 264-288 (KPFSAAARARANLPVGTPIHRLMLD) the chain is on the cytoplasmic side. A helical membrane pass occupies residues 289-309 (PYIAVVAGALTTCNIPLAFLE). The Lumenal, vesicle segment spans residues 310-325 (PTIATWMKHTMAASEW). Residues 326 to 346 (EMGMVWLPAFVPHVLGVYLTV) form a helical membrane-spanning segment. At 347-356 (RLAARYPHLQ) the chain is on the cytoplasmic side. A helical membrane pass occupies residues 357–377 (WLYGALGLAVIGVSSCVVPAC). The Lumenal, vesicle portion of the chain corresponds to 378-388 (RSFAPLVVSLC). Residues 389-409 (GLCFGIALVDTALLPTLAFLV) traverse the membrane as a helical segment. The Cytoplasmic portion of the chain corresponds to 410–422 (DVRHVSVYGSVYA). The chain crosses the membrane as a helical span at residues 423 to 443 (IADISYSVAYALGPIVAGHIV). The Lumenal, vesicle portion of the chain corresponds to 444 to 447 (HSLG). A helical membrane pass occupies residues 448–468 (FEQLSLGMGLANLLYAPVLLL). Residues 469–530 (LRNVGLLTRS…EDDYNYYSRS (62 aa)) are Cytoplasmic-facing. The mediates interaction with SEC14L1 stretch occupies residues 471-530 (NVGLLTRSRSERDVLLDEPPQGLYDAVRLREVQGKDGGEPCSPPGPFDGCEDDYNYYSRS). The disordered stretch occupies residues 504-530 (GKDGGEPCSPPGPFDGCEDDYNYYSRS).

It belongs to the major facilitator superfamily. Vesicular transporter family. As to quaternary structure, interacts with SEC14L1. As to expression, expressed in the spinal cord, brain (excluding the cerebellum), brain stem and cholinergic tissues. Not expressed in peripheral tissues such as liver and kidney.

The protein localises to the cytoplasmic vesicle. It is found in the secretory vesicle. Its subcellular location is the synaptic vesicle membrane. It carries out the reaction acetylcholine(out) + 2 H(+)(in) = acetylcholine(in) + 2 H(+)(out). It catalyses the reaction choline(in) + 2 H(+)(out) = choline(out) + 2 H(+)(in). The enzyme catalyses serotonin(in) + 2 H(+)(out) = serotonin(out) + 2 H(+)(in). Its function is as follows. Electrogenic antiporter that exchanges one cholinergic neurotransmitter, acetylcholine or choline, with two intravesicular protons across the membrane of synaptic vesicles. Uses the electrochemical proton gradient established by the V-type proton-pump ATPase to store neurotransmitters inside the vesicles prior to their release via exocytosis. Determines cholinergic vesicular quantal size at presynaptic nerve terminals in developing neuro-muscular junctions with an impact on motor neuron differentiation and innervation pattern. Part of forebrain cholinergic system, regulates hippocampal synapse transmissions that underlie spatial memory formation. Can transport serotonin. This chain is Vesicular acetylcholine transporter (Slc18a3), found in Mus musculus (Mouse).